Here is a 500-residue protein sequence, read N- to C-terminus: Probable 26S proteasome non-ATPase regulatory subunit 3 (500 aa).

Residues 253-432 (ARFLYYLGRI…GYMRTKESTD (180 aa)) enclose the PCI domain. A disordered region spans residues 462 to 484 (RYPPKSYGKELESAEERREREQQ). Residues 468–484 (YGKELESAEERREREQQ) show a composition bias toward basic and acidic residues.

This sequence belongs to the proteasome subunit S3 family. As to quaternary structure, the 26S proteasome is composed of a core protease, known as the 20S proteasome, capped at one or both ends by the 19S regulatory complex (RC). The RC is composed of at least 18 different subunits in two subcomplexes, the base and the lid, which form the portions proximal and distal to the 20S proteolytic core, respectively.

In terms of biological role, acts as a regulatory subunit of the 26 proteasome which is involved in the ATP-dependent degradation of ubiquitinated proteins. The protein is Probable 26S proteasome non-ATPase regulatory subunit 3 (DOXA2) of Anopheles stephensi (Indo-Pakistan malaria mosquito).